Consider the following 89-residue polypeptide: Small ribosomal subunit protein uS15c (89 aa).

This sequence belongs to the universal ribosomal protein uS15 family. Part of the 30S ribosomal subunit.

Its subcellular location is the plastid. The protein resides in the chloroplast. The chain is Small ribosomal subunit protein uS15c (rps15) from Chloranthus spicatus (Chulantree).